A 121-amino-acid polypeptide reads, in one-letter code: Large ribosomal subunit protein bL12 (121 aa).

It belongs to the bacterial ribosomal protein bL12 family. In terms of assembly, homodimer. Part of the ribosomal stalk of the 50S ribosomal subunit. Forms a multimeric L10(L12)X complex, where L10 forms an elongated spine to which 2 to 4 L12 dimers bind in a sequential fashion. Binds GTP-bound translation factors.

Forms part of the ribosomal stalk which helps the ribosome interact with GTP-bound translation factors. Is thus essential for accurate translation. This is Large ribosomal subunit protein bL12 from Streptococcus pyogenes serotype M3 (strain ATCC BAA-595 / MGAS315).